A 595-amino-acid chain; its full sequence is Glycine betaine transporter BetP (595 aa).

Residues Met-1–Asn-59 lie on the Cytoplasmic side of the membrane. Residues Trp-60–Phe-80 form a helical membrane-spanning segment. At Lys-81 to Asn-98 the chain is on the periplasmic side. A helical membrane pass occupies residues Leu-99–Ala-119. Topologically, residues Ser-120–Arg-137 are cytoplasmic. A helical membrane pass occupies residues Thr-138 to Gly-158. Na(+)-binding residues include Ala-147, Ala-148, and Met-150. Position 152–153 (Ile-152–Gly-153) interacts with glycine betaine. The Periplasmic portion of the chain corresponds to Thr-159–Thr-185. The helical transmembrane segment at Met-186–Tyr-206 threads the bilayer. At Ser-207 to Lys-236 the chain is on the cytoplasmic side. Residues Leu-237–Gly-257 form a helical membrane-spanning segment. Ser-253 is a binding site for glycine betaine. The Periplasmic portion of the chain corresponds to Ala-258–Asp-276. A helical membrane pass occupies residues Trp-277–Ser-296. At Gly-297–Gly-299 the chain is on the cytoplasmic side. Residues Lys-300–Val-323 form a helical membrane-spanning segment. Residues Ser-306 and Met-310 each coordinate Na(+). At Gly-324–Ser-365 the chain is on the periplasmic side. A helical membrane pass occupies residues Trp-366–Ala-386. Glycine betaine is bound at residue Trp-373–Trp-377. Over Arg-387–Glu-396 the chain is Cytoplasmic. A helical membrane pass occupies residues Phe-397–Gly-417. At Gly-418–Gln-451 the chain is on the periplasmic side. The helical transmembrane segment at Ile-452–Met-476 threads the bilayer. Residues Gly-477–Lys-489 are Cytoplasmic-facing. Residues Trp-490 to Gly-510 form a helical membrane-spanning segment. The Periplasmic segment spans residues Gly-511 to Asn-520. A helical transmembrane segment spans residues Val-521–Val-541. Over Lys-542–Arg-595 the chain is Cytoplasmic. Positions His-570–Arg-595 are disordered. Positions Lys-581–Arg-595 are enriched in basic residues.

Belongs to the BCCT transporter (TC 2.A.15) family. As to quaternary structure, homotrimer. The monomer can accumulate glycine betaine, but trimerization is required to properly respond to osmotic stress.

It localises to the cell inner membrane. Its activity is regulated as follows. Uptake is activated by hyperosmotic stress. Osmoresponsive activation is triggered by a change in the internal K(+) concentration. In addition, shows a pronounced chill stimulation, at temperatures around 10 degrees Celsius. Chill activation may be influenced by the membrane lipid composition. Uptake is completely abolished by the uncoupler CCCP, and to a different extent by the ionophores valinomycin and nigericin. Its function is as follows. Involved in response to osmotic stress. High-affinity glycine betaine-specific uptake system, which couples the uptake of glycine betaine to the symport of two Na(+) ions. Transport is driven both by the Na(+) gradient and by the electrical potential. In addition, functions both as an osmosensor and as an osmoregulator that transduces signal to the catalytic part of the carrier protein, which adapts its activity to the extent of osmotic stress. In Corynebacterium glutamicum (strain ATCC 13032 / DSM 20300 / JCM 1318 / BCRC 11384 / CCUG 27702 / LMG 3730 / NBRC 12168 / NCIMB 10025 / NRRL B-2784 / 534), this protein is Glycine betaine transporter BetP.